The primary structure comprises 182 residues: Pentatricopeptide repeat-containing protein At2g01360 (182 aa).

PPR repeat units follow at residues 30–64, 65–95, and 98–132; these read EKSAYLALAGNFLRSNELSKVIDVVKEMVKSQHSL, GVYHGAMLIHMLGFGRRPSLAAEALDLLPDD, and GLSAYTALMDVYISAGSPEKAMKILGEMREREIMP.

The protein belongs to the PPR family. P subfamily.

The sequence is that of Pentatricopeptide repeat-containing protein At2g01360 from Arabidopsis thaliana (Mouse-ear cress).